The primary structure comprises 116 residues: Small ribosomal subunit protein uS13 (116 aa).

Positions 92-116 (RRGLPVRGQNTKNNARTRKGTKRNR) are disordered. A compositionally biased stretch (basic residues) spans 106 to 116 (ARTRKGTKRNR).

It belongs to the universal ribosomal protein uS13 family. In terms of assembly, part of the 30S ribosomal subunit. Forms a loose heterodimer with protein S19. Forms two bridges to the 50S subunit in the 70S ribosome.

In terms of biological role, located at the top of the head of the 30S subunit, it contacts several helices of the 16S rRNA. In the 70S ribosome it contacts the 23S rRNA (bridge B1a) and protein L5 of the 50S subunit (bridge B1b), connecting the 2 subunits; these bridges are implicated in subunit movement. Contacts the tRNAs in the A and P-sites. The sequence is that of Small ribosomal subunit protein uS13 from Lactobacillus acidophilus (strain ATCC 700396 / NCK56 / N2 / NCFM).